A 262-amino-acid polypeptide reads, in one-letter code: Versicolorin reductase 1 (262 aa).

Residues Ile-21, Asp-67, Asn-94, and Arg-127 each coordinate NADP(+). Catalysis depends on proton donor residues Ser-143 and Ser-144. NADP(+)-binding residues include Tyr-158, Lys-162, Ile-191, and Thr-193. The active-site Proton acceptor is Tyr-158. The active-site Lowers pKa of active site Tyr is Lys-162.

Belongs to the short-chain dehydrogenases/reductases (SDR) family.

The protein resides in the cytoplasm. It is found in the cytosol. It carries out the reaction (4S,8R)-2,13,16,20-tetrahydroxy-7,9-dioxapentacyclo[10.8.0.0(3,10).0(4,8).0(14,19)]icosa-1(12),2,5,10,13,16,19-heptaen-18-one + NADPH + H(+) = (4S,8R,16R)-2,13,16,20-tetrahydroxy-7,9-dioxapentacyclo[10.8.0.0(3,10).0(4,8).0(14,19)]icosa-1(12),2,5,10,13,19-hexaen-18-one + NADP(+). It functions in the pathway mycotoxin biosynthesis; aflatoxin biosynthesis. Its function is as follows. Cytochrome P450 monooxygenase; part of the gene cluster that mediates the biosynthesis of aflatoxins, a group of polyketide-derived furanocoumarins, and part of the most toxic and carcinogenic compounds among the known mycotoxins. The four major aflatoxins produced by A.parasiticus are aflatoxin B1 (AFB1), aflatoxin B2 (AFB2), aflatoxin G1 (AFG1) and aflatoxin G2 (AFG2). Within the aflatoxin pathway, with the cytochrome P450 monooxygenase aflN, the versicolorin reductase aflM, is involved in conversion of VERA to demethylsterigmatocystin (DMST). The biosynthesis of aflatoxins begins with the norsolorinic acid synthase aflC that combines a hexanoyl starter unit produced by the fatty acid synthase aflA/aflB and 7 malonyl-CoA extender units to synthesize the precursor NOR. The second step is the conversion of NOR to averantin and requires the norsolorinic acid ketoreductase aflD, which catalyzes the dehydration of norsolorinic acid to form (1'S)-averantin. The norsolorinic acid reductases aflE and aflF may also play a role in the conversion of NOR to AVN. The cytochrome P450 monooxygenase aflG then catalyzes the hydroxylation of AVN to 5'hydroxyaverantin (HAVN). The next step is performed by the 5'-hydroxyaverantin dehydrogenase aflH that transforms HAVN to 5'-oxoaverantin (OAVN) which is further converted to averufin (AVF) by aflK that plays a dual role in the pathway, as a 5'-oxoaverantin cyclase that mediates conversion of 5'-oxoaverantin, as well as a versicolorin B synthase in a later step in the pathway. The averufin oxidase aflI catalyzes the conversion of AVF to versiconal hemiacetal acetate (VHA). VHA is then the substrate for the versiconal hemiacetal acetate esterase aflJ to yield versiconal (VAL). Versicolorin B synthase aflK then converts VAL to versicolorin B (VERB) by closing the bisfuran ring of aflatoxin which is required for DNA-binding, thus giving to aflatoxin its activity as a mutagen. Then, the activity of the versicolorin B desaturase aflL leads to versicolorin A (VERA). A branch point starts from VERB since it can also be converted to dihydrodemethylsterigmatocystin (DMDHST), probably also by aflL, VERA being a precursor for aflatoxins B1 and G1, and DMDHST for aflatoxins B2 and G2. Next, the versicolorin reductase aflM and the cytochrome P450 monooxygenase aflN are involved in conversion of VERA to demethylsterigmatocystin (DMST). AflX and aflY seem also involved in this step, through probable aflX-mediated epoxide ring-opening step following versicolorin A oxidation and aflY-mediated Baeyer-Villiger oxidation required for the formation of the xanthone ring. The methyltransferase aflO then leads to the modification of DMST to sterigmatocystin (ST), and of DMDHST to dihydrosterigmatocystin (DHST). Both ST and DHST are then substrates of the O-methyltransferase aflP to yield O-methylsterigmatocystin (OMST) and dihydro-O-methylsterigmatocystin (DHOMST), respectively. Finally OMST is converted to aflatoxins B1 and G1, and DHOMST to aflatoxins B2 and G2, via the action of several enzymes including O-methylsterigmatocystin oxidoreductase aflQ, the cytochrome P450 monooxygenase aflU, but also the NADH-dependent flavin oxidoreductase nadA which is specifically required for the synthesis of AFG1. This chain is Versicolorin reductase 1, found in Aspergillus parasiticus (strain ATCC 56775 / NRRL 5862 / SRRC 143 / SU-1).